We begin with the raw amino-acid sequence, 1075 residues long: Flocculation protein FLO5 (1075 aa).

Positions Met-1 to Gly-24 are cleaved as a signal peptide. A PA14 domain is found at Gly-74–Gly-249. N-linked (GlcNAc...) asparagine glycans are attached at residues Asn-135, Asn-187, Asn-203, and Asn-262. The segment at Asp-197–Gly-240 is sugar recognition. Tandem repeats lie at residues Thr-278–Thr-322, Thr-323–Thr-367, Thr-368–Thr-412, Thr-413–Thr-457, Thr-458–Ser-502, Thr-503–Thr-547, Thr-548–Thr-592, and Arg-593–Ser-637. The segment at Thr-278–Ser-637 is 8 X 45 AA approximate tandem repeats, Thr-rich. Low complexity-rich tracts occupy residues Thr-322–Thr-345, Thr-367–Thr-390, Thr-457–Thr-480, and Thr-547–Thr-570. Disordered regions lie at residues Thr-322–Pro-349, Ile-366–Pro-394, Ile-456–Pro-484, and Ile-546–Pro-574. The N-linked (GlcNAc...) asparagine glycan is linked to Asn-663. Tandem repeats lie at residues Val-667 to Ser-686 and Phe-687 to Glu-706. Positions Val-667 to Glu-706 are 2 X 20 AA approximate tandem repeats, Ser-rich. Residues Ser-702–Thr-762 are compositionally biased toward low complexity. Residues Ser-702–Gln-781 form a disordered region. A glycan (N-linked (GlcNAc...) asparagine) is linked at Asn-749. The segment covering Gly-763–Gln-781 has biased composition (polar residues). 3 repeat units span residues Thr-775 to Ser-825, Thr-847 to Ser-897, and Thr-898 to Thr-948. The tract at residues Thr-775–Thr-948 is 3 X 51 AA approximate repeats, Ser/Thr-rich. Over residues Thr-948–Met-958 the composition is skewed to polar residues. Disordered stretches follow at residues Thr-948–Ser-980 and Ser-1016–Val-1038. Composition is skewed to low complexity over residues Asn-959–Ala-977 and Ser-1016–Ser-1026. A compositionally biased stretch (polar residues) spans Gln-1027–Val-1038. The GPI-anchor amidated glycine moiety is linked to residue Gly-1052. A propeptide spans Ser-1053–Ile-1075 (removed in mature form).

This sequence belongs to the flocculin family. Post-translationally, extensively O-glycosylated. The GPI-anchor is attached to the protein in the endoplasmic reticulum and serves to target the protein to the cell surface. There, the glucosamine-inositol phospholipid moiety is cleaved off and the GPI-modified mannoprotein is covalently attached via its lipidless GPI glycan remnant to the 1,6-beta-glucan of the outer cell wall layer.

It localises to the secreted. The protein localises to the cell wall. The protein resides in the membrane. Cell wall protein that participates directly in adhesive cell-cell interactions during yeast flocculation, a reversible, asexual and Ca(2+)-dependent process in which cells adhere to form aggregates (flocs) consisting of thousands of cells. The lectin-like protein sticks out of the cell wall of flocculent cells and selectively binds mannose residues in the cell walls of adjacent cells. Activity is inhibited by mannose, but not by glucose, maltose, sucrose or galactose. The polypeptide is Flocculation protein FLO5 (FLO5) (Saccharomyces cerevisiae (strain ATCC 204508 / S288c) (Baker's yeast)).